Consider the following 625-residue polypeptide: Very-long-chain aldehyde decarbonylase CER1 (625 aa).

The next 5 helical transmembrane spans lie at 45–65, 126–146, 177–197, 200–220, and 329–349; these read LGYF…QVWI, GVLM…YWLH, PFAE…TTLL, TASI…NNMG, and LLWP…RLFV. The 135-residue stretch at 138–272 folds into the Fatty acid hydroxylase domain; that stretch reads VEFLYYWLHK…MPLYDYIYGT (135 aa).

The protein belongs to the sterol desaturase family. Homodimer. Interacts with CER3, CYTB5-B, CYTB5-C, CYTB5-D and CYTB5-E. In terms of tissue distribution, expressed in seedlings, stems, leaves, flowers, fruits and siliques. Not detected in roots, pollen and seeds. Expressed in trichomes, cotyledons, shoot apical meristem and leaf primordia. Preferentially associated with young leaves rather than mature leaves. Expressed in the epidermis of the stem and caulines leaves, in the carpels and the sepals.

It is found in the endoplasmic reticulum membrane. It carries out the reaction a long-chain fatty aldehyde + 2 NADPH + O2 + H(+) = a long-chain alkane + formate + 2 NADP(+) + H2O. Aldehyde decarbonylase involved in the conversion of aldehydes to alkanes. Core component of a very-long-chain alkane synthesis complex. Involved in epicuticular wax biosynthesis and pollen fertility. The protein is Very-long-chain aldehyde decarbonylase CER1 (CER1) of Arabidopsis thaliana (Mouse-ear cress).